The following is a 308-amino-acid chain: Glycerol-3-phosphate dehydrogenase [NAD(P)+] (308 aa).

Positions 13, 33, and 81 each coordinate NADPH. Sn-glycerol 3-phosphate-binding residues include Lys81 and Gly109. Ala113 contributes to the NADPH binding site. Sn-glycerol 3-phosphate is bound by residues Lys163, Asp216, Ser226, Arg227, and Asn228. The active-site Proton acceptor is Lys163. Arg227 contributes to the NADPH binding site. Residue Glu253 coordinates NADPH.

This sequence belongs to the NAD-dependent glycerol-3-phosphate dehydrogenase family.

Its subcellular location is the cytoplasm. The enzyme catalyses sn-glycerol 3-phosphate + NAD(+) = dihydroxyacetone phosphate + NADH + H(+). It carries out the reaction sn-glycerol 3-phosphate + NADP(+) = dihydroxyacetone phosphate + NADPH + H(+). The protein operates within membrane lipid metabolism; glycerophospholipid metabolism. Functionally, catalyzes the reduction of the glycolytic intermediate dihydroxyacetone phosphate (DHAP) to sn-glycerol 3-phosphate (G3P), the key precursor for phospholipid synthesis. This chain is Glycerol-3-phosphate dehydrogenase [NAD(P)+], found in Thermosynechococcus vestitus (strain NIES-2133 / IAM M-273 / BP-1).